A 546-amino-acid chain; its full sequence is 6'''-hydroxyparomomycin C oxidase (546 aa).

The interval 1–30 (MERLRGPSPLENTTARHPAPLGPAHRDGLE) is disordered. Catalysis depends on His475, which acts as the Proton acceptor.

Belongs to the GMC oxidoreductase family. The cofactor is FAD.

It participates in antibiotic biosynthesis; lividomycin biosynthesis. Glucosaminyl-6'-oxidase involved in the biosynthetic pathway of lividomycin by mediating FAD-dependent dehydrogenation of 6'''-hydroxyparomomycin to paromomycin. The sequence is that of 6'''-hydroxyparomomycin C oxidase (livQ) from Streptomyces lividus.